Reading from the N-terminus, the 301-residue chain is Envoplakin-like protein (301 aa).

Residues 1-88 (MQASADQVER…ERVTQECAEY (88 aa)) are a coiled coil. Disordered stretches follow at residues 18-41 (RLQQ…TGSS) and 118-166 (GLRR…PEPI). Positions 26 to 41 (SEQSQALQHQQETGSS) are enriched in polar residues. Residues 136–151 (GAQHRAEGDQRPRRAA) show a composition bias toward basic and acidic residues.

The protein belongs to the plakin or cytolinker family.

The sequence is that of Envoplakin-like protein (EVPLL) from Homo sapiens (Human).